The primary structure comprises 167 residues: Epithelial membrane protein 2 (167 aa).

Residues 1–21 form a helical membrane-spanning segment; that stretch reads MLVLLAFIIVFHITSAALLLV. Asparagine 44, asparagine 47, and asparagine 52 each carry an N-linked (GlcNAc...) asparagine glycan. The next 3 membrane-spanning stretches (helical) occupy residues 67–87, 95–115, and 143–163; these read TMIL…LQLF, FVLT…AASI, and FILA…YLIL.

It belongs to the PMP-22/EMP/MP20 family. In terms of assembly, interacts with PTK2; regulates PTK2 activation and localization. Interacts with ITGB3; regulates the levels of the heterodimer ITGA5-ITGB3 integrin surface expression. Interacts with P2RX7 (via C-terminus). Interacts with ITGB1; the interaction may be direct or indirect and ITGB1 has a heterodimer form.

The protein resides in the golgi apparatus membrane. The protein localises to the cell membrane. Its subcellular location is the apical cell membrane. It is found in the membrane raft. It localises to the cytoplasm. The protein resides in the nucleus. The protein localises to the perinuclear region. Its function is as follows. Functions as a key regulator of cell membrane composition by regulating protein surface expression. Also, plays a role in regulation of processes including cell migration, cell proliferation, cell contraction and cell adhesion. Regulates transepithelial migration of neutrophils into the alveolar lumen, potentially via mediation of cell surface expression of adhesion markers and lipid raft formation. Negatively regulates caveolae formation by reducing CAV1 expression and CAV1 amount by increasing lysosomal degradation. Facilitates surface trafficking and the formation of lipid rafts bearing GPI-anchor proteins. Regulates surface expression of MHC1 and ICAM1 proteins increasing susceptibility to T-cell mediated cytotoxicity. Regulates the plasma membrane expression of the integrin heterodimers ITGA6-ITGB1, ITGA5-ITGB3 and ITGA5-ITGB1 resulting in modulation of cell-matrix adhesion. Also regulates many processes through PTK2. Regulates blood vessel endothelial cell migration and angiogenesis by regulating VEGF protein expression through PTK2 activation. Regulates cell migration and cell contraction through PTK2 and SRC activation. Regulates focal adhesion density, F-actin conformation and cell adhesion capacity through interaction with PTK2. Positively regulates cell proliferation. Plays a role during cell death and cell blebbing. Promotes angiogenesis and vasculogenesis through induction of VEGFA via a HIF1A-dependent pathway. Also plays a role in embryo implantation by regulating surface trafficking of integrin heterodimer ITGA5-ITGB3. Plays a role in placental angiogenesis and uterine natural killer cell regulation at the maternal-fetal placental interface, however not required in the maternal tissues for a viable pregnancy. Involved in the early stages of embryogenic development and cardiogenesis, potentially via regulation of epithelial-mesenchymal transition timing. May play a role in glomerular filtration. This chain is Epithelial membrane protein 2 (EMP2), found in Bos taurus (Bovine).